A 305-amino-acid polypeptide reads, in one-letter code: Thymidylate synthase (305 aa).

DUMP-binding positions include arginine 26 and 160-161; that span reads RR. Cysteine 180 serves as the catalytic Nucleophile. DUMP contacts are provided by residues 207–210, asparagine 218, and 248–250; these read RSCD and HLY. Aspartate 210 lines the (6R)-5,10-methylene-5,6,7,8-tetrahydrofolate pocket. Residue alanine 304 coordinates (6R)-5,10-methylene-5,6,7,8-tetrahydrofolate.

It belongs to the thymidylate synthase family. Bacterial-type ThyA subfamily. As to quaternary structure, homodimer.

Its subcellular location is the cytoplasm. The catalysed reaction is dUMP + (6R)-5,10-methylene-5,6,7,8-tetrahydrofolate = 7,8-dihydrofolate + dTMP. The protein operates within pyrimidine metabolism; dTTP biosynthesis. Catalyzes the reductive methylation of 2'-deoxyuridine-5'-monophosphate (dUMP) to 2'-deoxythymidine-5'-monophosphate (dTMP) while utilizing 5,10-methylenetetrahydrofolate (mTHF) as the methyl donor and reductant in the reaction, yielding dihydrofolate (DHF) as a by-product. This enzymatic reaction provides an intracellular de novo source of dTMP, an essential precursor for DNA biosynthesis. This Sinorhizobium fredii (strain NBRC 101917 / NGR234) protein is Thymidylate synthase.